Reading from the N-terminus, the 333-residue chain is DNA-directed RNA polymerase subunit alpha (333 aa).

Positions 1–234 are alpha N-terminal domain (alpha-NTD); sequence MQISVNEFLT…QQLAAFVDLK (234 aa). An alpha C-terminal domain (alpha-CTD) region spans residues 248–333; that stretch reads IDPILLRPVD…SLKKDDKATA (86 aa).

It belongs to the RNA polymerase alpha chain family. In terms of assembly, homodimer. The RNAP catalytic core consists of 2 alpha, 1 beta, 1 beta' and 1 omega subunit. When a sigma factor is associated with the core the holoenzyme is formed, which can initiate transcription.

The enzyme catalyses RNA(n) + a ribonucleoside 5'-triphosphate = RNA(n+1) + diphosphate. Functionally, DNA-dependent RNA polymerase catalyzes the transcription of DNA into RNA using the four ribonucleoside triphosphates as substrates. This chain is DNA-directed RNA polymerase subunit alpha, found in Ectopseudomonas mendocina (strain ymp) (Pseudomonas mendocina).